Reading from the N-terminus, the 217-residue chain is Large ribosomal subunit protein uL3 (217 aa).

Belongs to the universal ribosomal protein uL3 family. Part of the 50S ribosomal subunit. Forms a cluster with proteins L14 and L19.

Functionally, one of the primary rRNA binding proteins, it binds directly near the 3'-end of the 23S rRNA, where it nucleates assembly of the 50S subunit. This Mycolicibacterium paratuberculosis (strain ATCC BAA-968 / K-10) (Mycobacterium paratuberculosis) protein is Large ribosomal subunit protein uL3.